The sequence spans 287 residues: Eukaryotic translation initiation factor 3 subunit F (287 aa).

Residues 12 to 142 form the MPN domain; it reads VRVHPVVLFQ…IKAYVCVSLG (131 aa).

This sequence belongs to the eIF-3 subunit F family. As to quaternary structure, component of the eukaryotic translation initiation factor 3 (eIF-3) complex.

It is found in the cytoplasm. Functionally, component of the eukaryotic translation initiation factor 3 (eIF-3) complex, which is involved in protein synthesis of a specialized repertoire of mRNAs and, together with other initiation factors, stimulates binding of mRNA and methionyl-tRNAi to the 40S ribosome. The eIF-3 complex specifically targets and initiates translation of a subset of mRNAs involved in cell proliferation. This chain is Eukaryotic translation initiation factor 3 subunit F, found in Aedes aegypti (Yellowfever mosquito).